A 188-amino-acid chain; its full sequence is Protein K (188 aa).

This Escherichia coli protein is Protein K (K).